Here is a 475-residue protein sequence, read N- to C-terminus: Aspartyl/glutamyl-tRNA(Asn/Gln) amidotransferase subunit B (475 aa).

It belongs to the GatB/GatE family. GatB subfamily. In terms of assembly, heterotrimer of A, B and C subunits.

It catalyses the reaction L-glutamyl-tRNA(Gln) + L-glutamine + ATP + H2O = L-glutaminyl-tRNA(Gln) + L-glutamate + ADP + phosphate + H(+). The catalysed reaction is L-aspartyl-tRNA(Asn) + L-glutamine + ATP + H2O = L-asparaginyl-tRNA(Asn) + L-glutamate + ADP + phosphate + 2 H(+). Allows the formation of correctly charged Asn-tRNA(Asn) or Gln-tRNA(Gln) through the transamidation of misacylated Asp-tRNA(Asn) or Glu-tRNA(Gln) in organisms which lack either or both of asparaginyl-tRNA or glutaminyl-tRNA synthetases. The reaction takes place in the presence of glutamine and ATP through an activated phospho-Asp-tRNA(Asn) or phospho-Glu-tRNA(Gln). The protein is Aspartyl/glutamyl-tRNA(Asn/Gln) amidotransferase subunit B of Chlorobium phaeobacteroides (strain BS1).